Reading from the N-terminus, the 245-residue chain is DNA polymerase sliding clamp (245 aa).

The protein belongs to the PCNA family. Homotrimer. The subunits circularize to form a toroid; DNA passes through its center. Replication factor C (RFC) is required to load the toroid on the DNA.

Its function is as follows. Sliding clamp subunit that acts as a moving platform for DNA processing. Responsible for tethering the catalytic subunit of DNA polymerase and other proteins to DNA during high-speed replication. This chain is DNA polymerase sliding clamp, found in Picrophilus torridus (strain ATCC 700027 / DSM 9790 / JCM 10055 / NBRC 100828 / KAW 2/3).